Consider the following 91-residue polypeptide: CRISPR-associated endoribonuclease Cas2 2 (91 aa).

D10 lines the Mg(2+) pocket.

It belongs to the CRISPR-associated endoribonuclease Cas2 protein family. Homodimer, forms a heterotetramer with a Cas1 homodimer. It depends on Mg(2+) as a cofactor.

Its function is as follows. CRISPR (clustered regularly interspaced short palindromic repeat), is an adaptive immune system that provides protection against mobile genetic elements (viruses, transposable elements and conjugative plasmids). CRISPR clusters contain sequences complementary to antecedent mobile elements and target invading nucleic acids. CRISPR clusters are transcribed and processed into CRISPR RNA (crRNA). Functions as a ssRNA-specific endoribonuclease. Involved in the integration of spacer DNA into the CRISPR cassette. In Thermodesulfovibrio yellowstonii (strain ATCC 51303 / DSM 11347 / YP87), this protein is CRISPR-associated endoribonuclease Cas2 2.